A 321-amino-acid polypeptide reads, in one-letter code: MKLSEIAEFLSLEYKGEDIEISALNSLLKANFTELTYCDGEKNTKDIPHTGAAAILVSKEYENLVPKDTKALITQSPHLSFAFLSKLFAKPLISTAKEKVQNIAKSARIMPNVYIGDNVNIGENVIIMAGAYIGDNVSIGDESIIHPNVVIYNDTKIGKKCHLLANCVIGSDGFGYAHNKNGEHYKIYHNGNVVLEDFVEVGACTTIDRAVFDSTIIKAGTKVDNLVQIGHNCNIGQNCIIVAQTGISGSSELGRNVIMGGQSATSGHLKIGDFSTIAARGGVSKNLEGGRVYGGFPIMLQKDWLKLQAKIAINFKEKSQD.

The active-site Proton acceptor is the His-231.

Belongs to the transferase hexapeptide repeat family. LpxD subfamily. In terms of assembly, homotrimer.

It catalyses the reaction a UDP-3-O-[(3R)-3-hydroxyacyl]-alpha-D-glucosamine + a (3R)-hydroxyacyl-[ACP] = a UDP-2-N,3-O-bis[(3R)-3-hydroxyacyl]-alpha-D-glucosamine + holo-[ACP] + H(+). It participates in bacterial outer membrane biogenesis; LPS lipid A biosynthesis. In terms of biological role, catalyzes the N-acylation of UDP-3-O-acylglucosamine using 3-hydroxyacyl-ACP as the acyl donor. Is involved in the biosynthesis of lipid A, a phosphorylated glycolipid that anchors the lipopolysaccharide to the outer membrane of the cell. This Campylobacter jejuni subsp. jejuni serotype O:2 (strain ATCC 700819 / NCTC 11168) protein is UDP-3-O-acylglucosamine N-acyltransferase.